Consider the following 469-residue polypeptide: 3-isopropylmalate dehydratase large subunit (469 aa).

3 residues coordinate [4Fe-4S] cluster: cysteine 347, cysteine 410, and cysteine 413.

Belongs to the aconitase/IPM isomerase family. LeuC type 1 subfamily. Heterodimer of LeuC and LeuD. [4Fe-4S] cluster is required as a cofactor.

It catalyses the reaction (2R,3S)-3-isopropylmalate = (2S)-2-isopropylmalate. Its pathway is amino-acid biosynthesis; L-leucine biosynthesis; L-leucine from 3-methyl-2-oxobutanoate: step 2/4. In terms of biological role, catalyzes the isomerization between 2-isopropylmalate and 3-isopropylmalate, via the formation of 2-isopropylmaleate. This chain is 3-isopropylmalate dehydratase large subunit, found in Burkholderia ambifaria (strain MC40-6).